The chain runs to 208 residues: MKKGLFITVEGIEGAGKTTNLNFIRSILEESGEEVVMTREPGGTPMAEEVRELLLRPREEAVSSTAELLLMFAARAQHLEQKIKPTIERGVHVLSDRFTDATYAYQGGGRGLSWAMIQDLEKLVQAGFKPDLTLLLRIDPETGMARARKRGALDRFEREKLEFYFCVQEGYMKRVAEDPERFLVVDAQQSLEEVQAAIAQGLAAKLAG.

Position 11 to 18 (11 to 18) interacts with ATP; that stretch reads GIEGAGKT.

Belongs to the thymidylate kinase family.

It catalyses the reaction dTMP + ATP = dTDP + ADP. Functionally, phosphorylation of dTMP to form dTDP in both de novo and salvage pathways of dTTP synthesis. The sequence is that of Thymidylate kinase from Hahella chejuensis (strain KCTC 2396).